The chain runs to 497 residues: Cytochrome P450 71A20 (497 aa).

Residues 3-23 (MILITLCLTTLLALLLKSILK) traverse the membrane as a helical segment. A heme-binding site is contributed by cysteine 440.

It belongs to the cytochrome P450 family. Heme serves as cofactor.

It localises to the membrane. The sequence is that of Cytochrome P450 71A20 (CYP71A20) from Arabidopsis thaliana (Mouse-ear cress).